The following is a 280-amino-acid chain: Phosphonates import ATP-binding protein PhnC (280 aa).

Positions Phe2 to Lys245 constitute an ABC transporter domain. Gly34–Ser41 contributes to the ATP binding site. The disordered stretch occupies residues Thr257–His280. The segment covering Glu260–Ser269 has biased composition (basic and acidic residues).

It belongs to the ABC transporter superfamily. Phosphonates importer (TC 3.A.1.9.1) family. As to quaternary structure, the complex is composed of two ATP-binding proteins (PhnC), two transmembrane proteins (PhnE) and a solute-binding protein (PhnD).

Its subcellular location is the cell inner membrane. The catalysed reaction is phosphonate(out) + ATP + H2O = phosphonate(in) + ADP + phosphate + H(+). Its function is as follows. Part of the ABC transporter complex PhnCDE involved in phosphonates import. Responsible for energy coupling to the transport system. The chain is Phosphonates import ATP-binding protein PhnC from Rhizobium johnstonii (strain DSM 114642 / LMG 32736 / 3841) (Rhizobium leguminosarum bv. viciae).